We begin with the raw amino-acid sequence, 258 residues long: Acetylglutamate kinase (258 aa).

Substrate is bound by residues G41–G42, R63, and N156.

It belongs to the acetylglutamate kinase family. ArgB subfamily.

The protein localises to the cytoplasm. It catalyses the reaction N-acetyl-L-glutamate + ATP = N-acetyl-L-glutamyl 5-phosphate + ADP. It participates in amino-acid biosynthesis; L-arginine biosynthesis; N(2)-acetyl-L-ornithine from L-glutamate: step 2/4. In terms of biological role, catalyzes the ATP-dependent phosphorylation of N-acetyl-L-glutamate. In Bacillus amyloliquefaciens (Bacillus velezensis), this protein is Acetylglutamate kinase.